The following is a 206-amino-acid chain: MPSRRRTLLKVIILGDSGVGKTSLMNQYVNKKFSNQYKATIGADFLTKEVQFEDRLFTLQIWDTAGQERFQSLGVAFYRGADCCVLVYDVNSAKSFEDLNNWREEFLIQASPSDPENFPFVVIGNKIDVDGGSSRVVSEKKARAWCASKGNIPYYETSAKVGTNVEDAFLCITTNAMKSGEEEEMYLPDTIDVGTSNPQRSTGCEC.

15 to 22 (GDSGVGKT) is a binding site for GTP. The short motif at 37–45 (YKATIGADF) is the Effector region element. Residues 63–67 (DTAGQ), 125–128 (NKID), and 158–159 (SA) each bind GTP. 2 S-geranylgeranyl cysteine lipidation sites follow: C204 and C206. C206 carries the cysteine methyl ester modification.

It belongs to the small GTPase superfamily. Rab family.

The protein localises to the cell membrane. Functionally, intracellular vesicle trafficking and protein transport. May play a role in adaptation to stress by recylcing macromolecules in specific cellular compartments. The chain is Ras-related protein RABG3e (RABG3E) from Arabidopsis thaliana (Mouse-ear cress).